A 494-amino-acid polypeptide reads, in one-letter code: Serine carboxypeptidase-like 21 (494 aa).

A signal peptide spans 1–23 (MGRLVEAIIASILLSLCFTITKS). Residues Asn-37 and Asn-69 are each glycosylated (N-linked (GlcNAc...) asparagine). Intrachain disulfides connect Cys-85/Cys-383, Cys-247/Cys-263, and Cys-286/Cys-350. Ser-179 is a catalytic residue. N-linked (GlcNAc...) asparagine glycosylation is found at Asn-198 and Asn-248. An N-linked (GlcNAc...) asparagine glycan is attached at Asn-402. The active site involves Asp-418. The N-linked (GlcNAc...) asparagine glycan is linked to Asn-460. The active site involves His-471.

The protein belongs to the peptidase S10 family. As to expression, expressed in flowers and siliques.

It localises to the secreted. In terms of biological role, probable carboxypeptidase. The protein is Serine carboxypeptidase-like 21 (SCPL21) of Arabidopsis thaliana (Mouse-ear cress).